Consider the following 161-residue polypeptide: Allophycocyanin beta chain (161 aa).

Asn71 carries the N4-methylasparagine modification. Cys81 contacts (2R,3E)-phycocyanobilin.

The protein belongs to the phycobiliprotein family. As to quaternary structure, heterodimer of an alpha and a beta chain. Post-translationally, contains one covalently linked phycocyanobilin chromophore.

The protein localises to the cellular thylakoid membrane. In terms of biological role, light-harvesting photosynthetic bile pigment-protein from the phycobiliprotein complex. Allophycocyanin has a maximum absorption at approximately 650 nanometers. The protein is Allophycocyanin beta chain (apcB) of Thermosynechococcus vestitus (strain NIES-2133 / IAM M-273 / BP-1).